A 122-amino-acid chain; its full sequence is Large ribosomal subunit protein uL14 (122 aa).

The protein belongs to the universal ribosomal protein uL14 family. In terms of assembly, part of the 50S ribosomal subunit. Forms a cluster with proteins L3 and L19. In the 70S ribosome, L14 and L19 interact and together make contacts with the 16S rRNA in bridges B5 and B8.

Its function is as follows. Binds to 23S rRNA. Forms part of two intersubunit bridges in the 70S ribosome. This chain is Large ribosomal subunit protein uL14, found in Rhodospirillum rubrum (strain ATCC 11170 / ATH 1.1.1 / DSM 467 / LMG 4362 / NCIMB 8255 / S1).